Here is a 460-residue protein sequence, read N- to C-terminus: C4-dicarboxylate transport protein (460 aa).

8 helical membrane-spanning segments follow: residues 21–38 (LYFQVIVAIVIGILIGHF), 53–75 (FIKLIKMVIAPIIFCTVVSGIAG), 88–110 (YALLYFEIVSTIALLIGLIVVNV), 153–175 (IVGAFANGDILQVLMFSVIFGFA), 196–218 (VMFNIINMIMKLAPIGAFGAMAF), 231–253 (LGQLMICFYITCVLFVVLVLGSI), 301–323 (VVGLVIPTGYSFNLDGTSIYLTM), and 363–385 (FIVLAATLSAVGHLPVAGLALIL). A disordered region spans residues 438–460 (PEDDLGVAEGPTPANAVNTTKTV).

Belongs to the dicarboxylate/amino acid:cation symporter (DAACS) (TC 2.A.23) family.

Its subcellular location is the cell inner membrane. Its function is as follows. Responsible for the transport of dicarboxylates such as succinate, fumarate, and malate from the periplasm across the membrane. In Pseudomonas syringae pv. tomato (strain ATCC BAA-871 / DC3000), this protein is C4-dicarboxylate transport protein.